We begin with the raw amino-acid sequence, 322 residues long: Formimidoylglutamase (322 aa).

Positions 130, 156, 158, 160, 244, and 246 each coordinate Mn(2+).

The protein belongs to the arginase family. Requires Mn(2+) as cofactor.

The enzyme catalyses N-formimidoyl-L-glutamate + H2O = formamide + L-glutamate. The protein operates within amino-acid degradation; L-histidine degradation into L-glutamate; L-glutamate from N-formimidoyl-L-glutamate (hydrolase route): step 1/1. Its function is as follows. Catalyzes the conversion of N-formimidoyl-L-glutamate to L-glutamate and formamide. This Geobacillus thermodenitrificans (strain NG80-2) protein is Formimidoylglutamase.